The sequence spans 239 residues: Probable transcriptional regulatory protein BPUM_0743 (239 aa).

Belongs to the TACO1 family. YeeN subfamily.

It localises to the cytoplasm. The protein is Probable transcriptional regulatory protein BPUM_0743 of Bacillus pumilus (strain SAFR-032).